Consider the following 490-residue polypeptide: Betaine aldehyde dehydrogenase (490 aa).

Ile27 and Asp93 together coordinate K(+). An NAD(+)-binding site is contributed by 150–152 (GAW). Lys162 (charge relay system) is an active-site residue. An NAD(+)-binding site is contributed by 176–179 (KPSE). Position 180 (Val180) interacts with K(+). 230–233 (GTTT) lines the NAD(+) pocket. Residue Leu246 participates in K(+) binding. The Proton acceptor role is filled by Glu252. NAD(+) contacts are provided by Gly254, Cys286, and Glu387. The active-site Nucleophile is Cys286. At Cys286 the chain carries Cysteine sulfenic acid (-SOH). The K(+) site is built by Lys457 and Gly460. Residue Glu464 is the Charge relay system of the active site.

This sequence belongs to the aldehyde dehydrogenase family. As to quaternary structure, dimer of dimers. K(+) is required as a cofactor.

It carries out the reaction betaine aldehyde + NAD(+) + H2O = glycine betaine + NADH + 2 H(+). It functions in the pathway amine and polyamine biosynthesis; betaine biosynthesis via choline pathway; betaine from betaine aldehyde: step 1/1. Functionally, involved in the biosynthesis of the osmoprotectant glycine betaine. Catalyzes the irreversible oxidation of betaine aldehyde to the corresponding acid. This chain is Betaine aldehyde dehydrogenase, found in Pseudomonas putida (strain GB-1).